A 363-amino-acid chain; its full sequence is 3-isopropylmalate dehydrogenase (363 aa).

An NAD(+)-binding site is contributed by 78–91 (GPKWEHLPPDQQPE). Substrate-binding residues include arginine 99, arginine 109, arginine 138, and aspartate 227. 3 residues coordinate Mg(2+): aspartate 227, aspartate 251, and aspartate 255. Residue 285–297 (GSAPDIAGKNIAN) participates in NAD(+) binding.

It belongs to the isocitrate and isopropylmalate dehydrogenases family. LeuB type 1 subfamily. In terms of assembly, homodimer. Mg(2+) serves as cofactor. Mn(2+) is required as a cofactor.

It localises to the cytoplasm. It catalyses the reaction (2R,3S)-3-isopropylmalate + NAD(+) = 4-methyl-2-oxopentanoate + CO2 + NADH. It functions in the pathway amino-acid biosynthesis; L-leucine biosynthesis; L-leucine from 3-methyl-2-oxobutanoate: step 3/4. Requires K(+) ions for optimum activity. Catalyzes the oxidation of 3-carboxy-2-hydroxy-4-methylpentanoate (3-isopropylmalate) to 3-carboxy-4-methyl-2-oxopentanoate. The product decarboxylates to 4-methyl-2 oxopentanoate. The protein is 3-isopropylmalate dehydrogenase of Escherichia coli (strain K12).